A 227-amino-acid chain; its full sequence is Orotate phosphoribosyltransferase (227 aa).

K34 lines the 5-phospho-alpha-D-ribose 1-diphosphate pocket. An orotate-binding site is contributed by 42-43; that stretch reads FF. Residues 80–81, R106, K107, K110, H112, and 131–139 each bind 5-phospho-alpha-D-ribose 1-diphosphate; these read YK and DDVISAGTS. Residues S135 and R163 each coordinate orotate.

This sequence belongs to the purine/pyrimidine phosphoribosyltransferase family. PyrE subfamily. As to quaternary structure, homodimer. The cofactor is Mg(2+).

The catalysed reaction is orotidine 5'-phosphate + diphosphate = orotate + 5-phospho-alpha-D-ribose 1-diphosphate. The protein operates within pyrimidine metabolism; UMP biosynthesis via de novo pathway; UMP from orotate: step 1/2. Functionally, catalyzes the transfer of a ribosyl phosphate group from 5-phosphoribose 1-diphosphate to orotate, leading to the formation of orotidine monophosphate (OMP). The sequence is that of Orotate phosphoribosyltransferase from Cupriavidus necator (strain ATCC 17699 / DSM 428 / KCTC 22496 / NCIMB 10442 / H16 / Stanier 337) (Ralstonia eutropha).